The sequence spans 610 residues: UvrABC system protein C (610 aa).

Residues 16-94 (SQPGVYRMYD…IKLYQPRYNV (79 aa)) enclose the GIY-YIG domain. A UVR domain is found at 204-239 (QQVLTQLITRMEEASQQLHFEDAARIRDQIQAVRRV).

The protein belongs to the UvrC family. In terms of assembly, interacts with UvrB in an incision complex.

It is found in the cytoplasm. Its function is as follows. The UvrABC repair system catalyzes the recognition and processing of DNA lesions. UvrC both incises the 5' and 3' sides of the lesion. The N-terminal half is responsible for the 3' incision and the C-terminal half is responsible for the 5' incision. This Yersinia pseudotuberculosis serotype O:1b (strain IP 31758) protein is UvrABC system protein C.